Consider the following 265-residue polypeptide: MVELKEPLATLWRGKDAFAEVKKLNGEVFRELETRRTLRFELSGKSYFLKWHKGTTLKEIIKNLLSLRMPVLGADREWHAIHRLSDVGVDTMKGIGFGEKGLNPLTRASFIITEDLTPTISLEDYCADWAVNPPDIRVKRMLIARVATMVRKMHTAGINHRDCYICHFLLHLPFTGREDELKISVIDLHRAQIRAKVPRRWRDKDLIGLYFSSMNIGLTQRDIWRFMKVYFGMPLRKILSLEQNLLNMASVKAERIKERTQRKGL.

The active site involves aspartate 162.

The protein belongs to the protein kinase superfamily. KdkA/RfaP family. Requires Mg(2+) as cofactor.

It carries out the reaction an L-alpha-D-Hep-(1-&gt;3)-L-alpha-D-Hep-(1-&gt;5)-[alpha-Kdo-(2-&gt;4)]-alpha-Kdo-(2-&gt;6)-lipid A + ATP = an L-alpha-D-Hep-(1-&gt;3)-4-O-phospho-L-alpha-D-Hep-(1-&gt;5)-[alpha-Kdo-(2-&gt;4)]-alpha-Kdo-(2-&gt;6)-lipid A + ADP + H(+). The enzyme catalyses L-alpha-D-Hep-(1-&gt;3)-L-alpha-D-Hep-(1-&gt;5)-[alpha-Kdo-(2-&gt;4)]-alpha-Kdo-(2-&gt;6)-lipid A (E. coli) + ATP = L-alpha-D-Hep-(1-&gt;3)-4-O-phospho-L-alpha-D-Hep-(1-&gt;5)-[alpha-Kdo-(2-&gt;4)]-alpha-Kdo-(2-&gt;6)-lipid A (E. coli) + ADP + H(+). The protein operates within bacterial outer membrane biogenesis; LPS core biosynthesis. Kinase involved in the biosynthesis of the core oligosaccharide region of lipopolysaccharide (LPS). Catalyzes the phosphorylation of heptose I (HepI), the first heptose added to the Kdo2-lipid A module. The sequence is that of Lipopolysaccharide core heptose(I) kinase WaaP from Escherichia coli (strain K12).